The following is a 165-amino-acid chain: Ureidoglycolate lyase (165 aa).

It belongs to the ureidoglycolate lyase family. In terms of assembly, homodimer. It depends on Ni(2+) as a cofactor.

The catalysed reaction is (S)-ureidoglycolate = urea + glyoxylate. Its pathway is nitrogen metabolism; (S)-allantoin degradation. Catalyzes the catabolism of the allantoin degradation intermediate (S)-ureidoglycolate, generating urea and glyoxylate. Involved in the utilization of allantoin as nitrogen source. The protein is Ureidoglycolate lyase of Chelativorans sp. (strain BNC1).